Here is an 86-residue protein sequence, read N- to C-terminus: Small ribosomal subunit protein bS20 (86 aa).

It belongs to the bacterial ribosomal protein bS20 family.

Binds directly to 16S ribosomal RNA. The protein is Small ribosomal subunit protein bS20 of Novosphingobium aromaticivorans (strain ATCC 700278 / DSM 12444 / CCUG 56034 / CIP 105152 / NBRC 16084 / F199).